The sequence spans 391 residues: Somatostatin receptor type 1 (391 aa).

A disordered region spans residues 1 to 50 (MFPNGTAPSPTSSPSSSPGGCGEGVCSRGPGSGAADGMEEPGRNSSQNGT). The Extracellular segment spans residues 1–56 (MFPNGTAPSPTSSPSSSPGGCGEGVCSRGPGSGAADGMEEPGRNSSQNGTLSEGQG). The N-linked (GlcNAc...) asparagine glycan is linked to Asn4. Residues 8–18 (PSPTSSPSSSP) are compositionally biased toward low complexity. Residues Asn44 and Asn48 are each glycosylated (N-linked (GlcNAc...) asparagine). A helical transmembrane segment spans residues 57–84 (SAILISFIYSVVCLVGLCGNSMVIYVIL). Residues 85–94 (RYAKMKTATN) lie on the Cytoplasmic side of the membrane. A helical transmembrane segment spans residues 95-120 (IYILNLAIADELLMLSVPFLVTSTLL). The Extracellular portion of the chain corresponds to 121–131 (RHWPFGALLCR). A disulfide bond links Cys130 and Cys208. The helical transmembrane segment at 132-153 (LVLSVDAVNMFTSIYCLTVLSV) threads the bilayer. The Cytoplasmic portion of the chain corresponds to 154–175 (DRYVAVVHPIKAARYRRPTVAK). Residues 176-196 (VVNLGVWVLSLLVILPIVVFS) traverse the membrane as a helical segment. Over 197 to 219 (RTAANSDGTVACNMLMPEPAQRW) the chain is Extracellular. The helical transmembrane segment at 220 to 244 (LVGFVLYTFLMGFLLPVGAICLCYV) threads the bilayer. The Cytoplasmic segment spans residues 245 to 270 (LIIAKMRMVALKAGWQQRKRSERKIT). Residues 271–296 (LMVMMVVMVFVICWMPFYVVQLVNVF) form a helical membrane-spanning segment. The Extracellular portion of the chain corresponds to 297–303 (AEQDDAT). The helical transmembrane segment at 304-327 (VSQLSVILGYANSCANPILYGFLS) threads the bilayer. At 328 to 391 (DNFKRSFQRI…GTCASRISTL (64 aa)) the chain is on the cytoplasmic side. Residue Cys339 is the site of S-palmitoyl cysteine attachment.

Belongs to the G-protein coupled receptor 1 family. In terms of tissue distribution, brain, pituitary, islet, jejunum, stomach, heart, spleen.

It localises to the cell membrane. Functionally, receptor for somatostatin with higher affinity for somatostatin-14 than -28. This receptor is coupled to phosphotyrosine phosphatase and Na(+)/H(+) exchanger via pertussis toxin insensitive G proteins. This is Somatostatin receptor type 1 (Sstr1) from Rattus norvegicus (Rat).